Consider the following 204-residue polypeptide: Imidazole glycerol phosphate synthase subunit HisH (204 aa).

Residues 5-204 (KVVIIDTGCA…AKLIQNFLEL (200 aa)) enclose the Glutamine amidotransferase type-1 domain. The active-site Nucleophile is cysteine 80. Catalysis depends on residues histidine 186 and glutamate 188.

As to quaternary structure, heterodimer of HisH and HisF.

It localises to the cytoplasm. It catalyses the reaction 5-[(5-phospho-1-deoxy-D-ribulos-1-ylimino)methylamino]-1-(5-phospho-beta-D-ribosyl)imidazole-4-carboxamide + L-glutamine = D-erythro-1-(imidazol-4-yl)glycerol 3-phosphate + 5-amino-1-(5-phospho-beta-D-ribosyl)imidazole-4-carboxamide + L-glutamate + H(+). The enzyme catalyses L-glutamine + H2O = L-glutamate + NH4(+). It functions in the pathway amino-acid biosynthesis; L-histidine biosynthesis; L-histidine from 5-phospho-alpha-D-ribose 1-diphosphate: step 5/9. IGPS catalyzes the conversion of PRFAR and glutamine to IGP, AICAR and glutamate. The HisH subunit catalyzes the hydrolysis of glutamine to glutamate and ammonia as part of the synthesis of IGP and AICAR. The resulting ammonia molecule is channeled to the active site of HisF. The protein is Imidazole glycerol phosphate synthase subunit HisH of Vibrio parahaemolyticus serotype O3:K6 (strain RIMD 2210633).